A 518-amino-acid polypeptide reads, in one-letter code: MWIIFLIIGLLVLGLLVLLIIAARYQRDYWRYLDIPHERPKKLWPIIRQIMTQTLSTEAMKAEHYSAIYKKFKGSGPFCGFYALLQPRALILDRELIRQIMIKDFWNFNDRGLYCNQKSDPLSGDLYALRGESWKEMRQKLDPSLEGDRMSLLYDCLYEEAEQLLLTVNSTLMSQPHSTVHIQKIMRRYVLSSLAKCVFGLNAEQRKTYPLEDFEQMTELALNSHKHGYLMNLMMIRFPNFCRMLRMRRTPKQAEEYFIKLLTSIVEQRETSGKPQKDYLQLLIDVKALEFITYQYEADKELGAHLQNELAAHADVFLKAGYEQTANTLSYVLYELALHPELQVRVREEVKKAIERHDGHITHEGIKSLSFMGQVINETLRMHPITPYILRRTLNDYAVPDHPKYILVKELFLIIPTHAIHHDPDIYPDPEEFKPDRWSGPRDSLQEQGTWFGFGVGARSCIGIQFAQLQLRLALALLLSEYEFSLNTRKPLINLEDGIALTLMPLGVIEPGNEERAV.

C461 lines the heme pocket.

It belongs to the cytochrome P450 family. Heme serves as cofactor.

The protein resides in the endoplasmic reticulum membrane. It localises to the microsome membrane. Functionally, may be involved in the metabolism of insect hormones and in the breakdown of synthetic insecticides. The chain is Probable cytochrome P450 317a1 (Cyp317a1) from Drosophila melanogaster (Fruit fly).